A 392-amino-acid chain; its full sequence is Nicotinate phosphoribosyltransferase (392 aa).

Phosphohistidine; by autocatalysis is present on histidine 214.

This sequence belongs to the NAPRTase family. In terms of processing, transiently phosphorylated on a His residue during the reaction cycle. Phosphorylation strongly increases the affinity for substrates and increases the rate of nicotinate D-ribonucleotide production. Dephosphorylation regenerates the low-affinity form of the enzyme, leading to product release.

It carries out the reaction nicotinate + 5-phospho-alpha-D-ribose 1-diphosphate + ATP + H2O = nicotinate beta-D-ribonucleotide + ADP + phosphate + diphosphate. The protein operates within cofactor biosynthesis; NAD(+) biosynthesis; nicotinate D-ribonucleotide from nicotinate: step 1/1. Its function is as follows. Catalyzes the synthesis of beta-nicotinate D-ribonucleotide from nicotinate and 5-phospho-D-ribose 1-phosphate at the expense of ATP. This is Nicotinate phosphoribosyltransferase from Xanthomonas axonopodis pv. citri (strain 306).